We begin with the raw amino-acid sequence, 319 residues long: Ankyrin repeat domain-containing protein 1 (319 aa).

The stretch at 61–89 (KSEKQREAELKKKKLEQRSKLENLEDLEI) forms a coiled coil. ANK repeat units follow at residues 152 to 181 (YKRT…QIEF), 185 to 214 (LEST…KISA), 218 to 247 (LLST…DLNA), 251 to 280 (EGDT…DLNI), and 284 to 315 (AGKT…KTSR).

As to quaternary structure, interacts with YBX1. Interacts with TTN/titin. As to expression, mainly expressed in activated vascular endothelial cells. To a lower extent, also expressed in hepatoma cells.

Its subcellular location is the nucleus. In terms of biological role, may play an important role in endothelial cell activation. May act as a nuclear transcription factor that negatively regulates the expression of cardiac genes. Induction seems to be correlated with apoptotic cell death in hepatoma cells. The chain is Ankyrin repeat domain-containing protein 1 (ANKRD1) from Homo sapiens (Human).